Consider the following 453-residue polypeptide: Armadillo repeat-containing X-linked protein 1 (453 aa).

At 1-6 (MGRTRE) the chain is on the mitochondrial intermembrane side. Mitochondrion outer membrane (MOM)-targeting sequence regions lie at residues 1–6 (MGRTRE) and 26–36 (RLAWGRDENEK). The chain crosses the membrane as a helical; Signal-anchor span at residues 7–29 (AGCVAAGVVIGAGACYCVYRLAW). Over 30–453 (GRDENEKIWD…VKVLKVLTKL (424 aa)) the chain is Cytoplasmic. 2 disordered regions span residues 58–77 (AKTN…SEVK) and 132–182 (ISGN…RAPA). Basic residues predominate over residues 167–177 (GKSKGKARSKS). ARM repeat units follow at residues 195-235 (PYKI…NNAA), 237-276 (SFNQ…NLSV), 358-398 (PAMT…NIND), and 415-453 (SSLF…LTKL).

It belongs to the eutherian X-chromosome-specific Armcx family. Interacts with MIRO1. As to expression, expressed at high levels ovary, heart, testis, prostate, brain, spleen and colon. Expressed at very low levels in liver and thymus. Not expressed in peripheral blood leukocytes. Not or reduced expressed in lung, prostate, colon, pancreas and ovarian carcinomas.

It is found in the mitochondrion. Its subcellular location is the mitochondrion outer membrane. Functionally, regulates mitochondrial transport during axon regeneration. Increases the proportion of motile mitochondria by recruiting stationary mitochondria into the motile pool. Enhances mitochondria movement and neurite growth in both adult axons and embryonic neurons. Promotes neuronal survival and axon regeneration after nerve injury. May link mitochondria to the Trak1-kinesin motor complex via its interaction with MIRO1. In Homo sapiens (Human), this protein is Armadillo repeat-containing X-linked protein 1 (ARMCX1).